We begin with the raw amino-acid sequence, 116 residues long: Iron-sulfur cluster assembly protein CyaY (116 aa).

It belongs to the frataxin family.

In terms of biological role, involved in iron-sulfur (Fe-S) cluster assembly. May act as a regulator of Fe-S biogenesis. The chain is Iron-sulfur cluster assembly protein CyaY from Polaromonas sp. (strain JS666 / ATCC BAA-500).